Reading from the N-terminus, the 145-residue chain is UPF0310 protein PH1033 (145 aa).

This sequence belongs to the UPF0310 family.

This Pyrococcus horikoshii (strain ATCC 700860 / DSM 12428 / JCM 9974 / NBRC 100139 / OT-3) protein is UPF0310 protein PH1033.